We begin with the raw amino-acid sequence, 216 residues long: Noggin-1 (216 aa).

A signal peptide spans 1-18 (MDFPRFLLSAYLLLLSFA). Asn-55 carries N-linked (GlcNAc...) asparagine glycosylation.

The protein belongs to the noggin family. As to quaternary structure, homodimer; disulfide-linked.

The protein localises to the secreted. Functionally, inhibitor of bone morphogenetic proteins (BMP) signaling. May play an important role in the dorsoventral patterning of the embryo. The chain is Noggin-1 (nog1) from Danio rerio (Zebrafish).